A 119-amino-acid polypeptide reads, in one-letter code: Holo-[acyl-carrier-protein] synthase (119 aa).

Mg(2+) contacts are provided by aspartate 8 and glutamate 58.

This sequence belongs to the P-Pant transferase superfamily. AcpS family. Mg(2+) is required as a cofactor.

The protein localises to the cytoplasm. It carries out the reaction apo-[ACP] + CoA = holo-[ACP] + adenosine 3',5'-bisphosphate + H(+). Transfers the 4'-phosphopantetheine moiety from coenzyme A to a Ser of acyl-carrier-protein. The sequence is that of Holo-[acyl-carrier-protein] synthase from Bacillus cereus (strain B4264).